The chain runs to 776 residues: Cilium assembly protein DZIP1L (776 aa).

The C2H2-type zinc-finger motif lies at 166–189 (HTCHLCDKTFMNATFLRGHIQRRH). Positions 196–450 (GKQKQEQQLG…RKVLAALRNN (255 aa)) form a coiled coil. A phosphoserine mark is found at S425 and S426. Residues 520 to 776 (SRAKKRWEGT…SGSRPRIPGW (257 aa)) form a disordered region. Positions 600-618 (GPSSTPVSPGPGLSTPPFS) are enriched in low complexity. Over residues 652–683 (WSDSETSEESAQSPGKGSDGLASSATLVQSMV) the composition is skewed to polar residues. A compositionally biased stretch (basic and acidic residues) spans 685–694 (NLEKQLETPA). The segment covering 709 to 721 (TALQRSSTPARKT) has biased composition (polar residues).

Belongs to the DZIP C2H2-type zinc-finger protein family. Interacts with SEPTIN2.

It is found in the cytoplasm. The protein localises to the cytoskeleton. The protein resides in the cilium basal body. Its subcellular location is the microtubule organizing center. It localises to the centrosome. It is found in the centriole. In terms of biological role, involved in primary cilium formation. Probably acts as a transition zone protein required for localization of PKD1/PC1 and PKD2/PC2 to the ciliary membrane. This Rattus norvegicus (Rat) protein is Cilium assembly protein DZIP1L.